Consider the following 147-residue polypeptide: Ubiquitin-conjugating enzyme E2 D4 (147 aa).

The region spanning 1-147 (MALKRIQKEL…AREWTQKYAM (147 aa)) is the UBC core domain. C85 acts as the Glycyl thioester intermediate in catalysis.

This sequence belongs to the ubiquitin-conjugating enzyme family. In terms of assembly, interacts with map3k10/mlk2. In terms of tissue distribution, at embryonic stages 28 to 35, expressed in the somites, eye primordia, otic vesicle and branchial arches. By stage 35, also weakly expressed in the pronephros.

The enzyme catalyses S-ubiquitinyl-[E1 ubiquitin-activating enzyme]-L-cysteine + [E2 ubiquitin-conjugating enzyme]-L-cysteine = [E1 ubiquitin-activating enzyme]-L-cysteine + S-ubiquitinyl-[E2 ubiquitin-conjugating enzyme]-L-cysteine.. It functions in the pathway protein modification; protein ubiquitination. Functionally, catalyzes the covalent attachment of ubiquitin to other proteins. Regulates pronephros development, possibly by promoting ubiquitination and thus inactivation or degradation of map3k10/mlk2. The polypeptide is Ubiquitin-conjugating enzyme E2 D4 (ube2d4) (Xenopus laevis (African clawed frog)).